Reading from the N-terminus, the 289-residue chain is ATP phosphoribosyltransferase (289 aa).

Belongs to the ATP phosphoribosyltransferase family. Long subfamily. Mg(2+) serves as cofactor.

It localises to the cytoplasm. It carries out the reaction 1-(5-phospho-beta-D-ribosyl)-ATP + diphosphate = 5-phospho-alpha-D-ribose 1-diphosphate + ATP. It functions in the pathway amino-acid biosynthesis; L-histidine biosynthesis; L-histidine from 5-phospho-alpha-D-ribose 1-diphosphate: step 1/9. Feedback inhibited by histidine. Its function is as follows. Catalyzes the condensation of ATP and 5-phosphoribose 1-diphosphate to form N'-(5'-phosphoribosyl)-ATP (PR-ATP). Has a crucial role in the pathway because the rate of histidine biosynthesis seems to be controlled primarily by regulation of HisG enzymatic activity. This is ATP phosphoribosyltransferase from Methanosarcina barkeri (strain Fusaro / DSM 804).